The sequence spans 181 residues: MALEIPKIEAILRGIAILLLVSTACLVGLDSQTKFVIVYEKEVTYKDLHALVVLVYVDAVAAAYNLLQLCRCSVSALSKGNFKGSYRYLSWACFVLDQLAAYTTFAAHSAALQHSVLGITGAKVFQWMKWCNRFTRFCFQIGGALTCGYIASVLMVMISFISAFNLFRLYSPKHFLRLKGT.

Topologically, residues Met1 to Lys7 are cytoplasmic. The helical transmembrane segment at Ile8–Gly28 threads the bilayer. Residues Leu29 to His49 are Extracellular-facing. The chain crosses the membrane as a helical span at residues Ala50 to Cys70. Residues Arg71–Gln98 lie on the Cytoplasmic side of the membrane. Residues Leu99–Ile119 form a helical membrane-spanning segment. The Extracellular portion of the chain corresponds to Thr120–Gln140. The helical transmembrane segment at Ile141–Ile161 threads the bilayer. Residues Ser162–Thr181 are Cytoplasmic-facing.

Belongs to the Casparian strip membrane proteins (CASP) family. In terms of assembly, homodimer and heterodimers.

The protein localises to the cell membrane. This is CASP-like protein 2C1 from Populus trichocarpa (Western balsam poplar).